The chain runs to 310 residues: 4-hydroxyproline epimerase (310 aa).

C88 (proton acceptor) is an active-site residue. Residues 89 to 90 (GH), H208, and D232 contribute to the substrate site. Residue C236 is the Proton donor of the active site. Residue 237–238 (GT) coordinates substrate.

Belongs to the proline racemase family. Homodimer.

It catalyses the reaction trans-4-hydroxy-L-proline = cis-4-hydroxy-D-proline. Its activity is regulated as follows. Inhibited by iodoacetate, iodoacetamide and by high amounts (10 mM) of pyrrole-2-carboxylic acid (PYC). Not inhibited by PYC at 1 mM. Allows intracellular utilization of 4-hydroxyproline, one of the major constituents of host collagen, by converting 4-hydroxy-L-proline to 4-hydroxy-D-proline, which can be further metabolized by intracellular 4-hydroxy-D-proline oxidases. This is 4-hydroxyproline epimerase from Burkholderia pseudomallei (strain K96243).